Reading from the N-terminus, the 211-residue chain is MRTLVVDHPLVAHKLTVLRDKNTPSPVFRQLTEELVTLLAYEATRDVRTEPVTIETPVSTTIGTAFTKPTPLVVPILRAGLGMLEGMTKLVPTAEVGFLGMARDEETLDIITYAERLPENLTDRQIFVLDPMLATGGTLREAIKFLFKRGASDVTCICLLAAPEGLAKLEEELSDANVTIVLASIDEKLNEKSYIVPGLGDAGDRLYGIAG.

5-phospho-alpha-D-ribose 1-diphosphate-binding positions include Arg-78, Arg-103, and 130–138 (DPMLATGGT). Uracil-binding positions include Ile-195 and 200–202 (GDA). Asp-201 is a binding site for 5-phospho-alpha-D-ribose 1-diphosphate.

Belongs to the UPRTase family. Mg(2+) is required as a cofactor.

The catalysed reaction is UMP + diphosphate = 5-phospho-alpha-D-ribose 1-diphosphate + uracil. Its pathway is pyrimidine metabolism; UMP biosynthesis via salvage pathway; UMP from uracil: step 1/1. Its activity is regulated as follows. Allosterically activated by GTP. Its function is as follows. Catalyzes the conversion of uracil and 5-phospho-alpha-D-ribose 1-diphosphate (PRPP) to UMP and diphosphate. The sequence is that of Uracil phosphoribosyltransferase from Arthrobacter sp. (strain FB24).